The chain runs to 148 residues: FAD synthase (148 aa).

ATP-binding positions include 11-12 (TF), 16-19 (HPGH), Asn-94, and Tyr-121.

It belongs to the archaeal FAD synthase family. Homodimer. A divalent metal cation is required as a cofactor.

The catalysed reaction is FMN + ATP + H(+) = FAD + diphosphate. It functions in the pathway cofactor biosynthesis; FAD biosynthesis; FAD from FMN: step 1/1. In terms of biological role, catalyzes the transfer of the AMP portion of ATP to flavin mononucleotide (FMN) to produce flavin adenine dinucleotide (FAD) coenzyme. The chain is FAD synthase from Methanoregula boonei (strain DSM 21154 / JCM 14090 / 6A8).